We begin with the raw amino-acid sequence, 105 residues long: Small ribosomal subunit protein uS17 (105 aa).

The protein belongs to the universal ribosomal protein uS17 family. In terms of assembly, part of the 30S ribosomal subunit.

In terms of biological role, one of the primary rRNA binding proteins, it binds specifically to the 5'-end of 16S ribosomal RNA. The polypeptide is Small ribosomal subunit protein uS17 (Thermus thermophilus (strain ATCC BAA-163 / DSM 7039 / HB27)).